A 96-amino-acid polypeptide reads, in one-letter code: Protein Vpr (96 aa).

Positions 1 to 42 are homooligomerization; that stretch reads MEQAPGDQGPQREPYNEWALEILEELKNEAVRHFPRPWLHGL. 3 positions are modified to phosphoserine; by host: Ser-79, Ser-94, and Ser-96.

Belongs to the HIV-1 VPR protein family. In terms of assembly, homooligomer, may form homodimer. Interacts with p6-gag region of the Pr55 Gag precursor protein through a (Leu-X-X)4 motif near the C-terminus of the P6gag protein. Interacts with host UNG. May interact with host RAD23A/HHR23A. Interacts with host VPRBP/DCAF1, leading to hijack the CUL4A-RBX1-DDB1-DCAF1/VPRBP complex, mediating ubiquitination of host proteins such as TERT and ZGPAT and arrest of the cell cycle in G2 phase. Post-translationally, phosphorylated on several residues by host. These phosphorylations regulate VPR activity for the nuclear import of the HIV-1 pre-integration complex.

The protein resides in the virion. It is found in the host nucleus. Its subcellular location is the host extracellular space. In terms of biological role, during virus replication, may deplete host UNG protein, and incude G2-M cell cycle arrest. Acts by targeting specific host proteins for degradation by the 26S proteasome, through association with the cellular CUL4A-DDB1 E3 ligase complex by direct interaction with host VPRPB/DCAF-1. Cell cycle arrest reportedly occurs within hours of infection and is not blocked by antiviral agents, suggesting that it is initiated by the VPR carried into the virion. Additionally, VPR induces apoptosis in a cell cycle dependent manner suggesting that these two effects are mechanistically linked. Detected in the serum and cerebrospinal fluid of AIDS patient, VPR may also induce cell death to bystander cells. Functionally, during virus entry, plays a role in the transport of the viral pre-integration (PIC) complex to the host nucleus. This function is crucial for viral infection of non-dividing macrophages. May act directly at the nuclear pore complex, by binding nucleoporins phenylalanine-glycine (FG)-repeat regions. This is Protein Vpr from Human immunodeficiency virus type 1 group M subtype F1 (isolate VI850) (HIV-1).